The chain runs to 133 residues: uncharacterized protein (133 aa).

A Response regulatory domain is found at 9–128; it reads RILVYSDNVQ…VLGRTVLSLL (120 aa). D64 bears the 4-aspartylphosphate mark.

This is an uncharacterized protein from Mycobacterium tuberculosis (strain CDC 1551 / Oshkosh).